A 415-amino-acid polypeptide reads, in one-letter code: Gamma-glutamyl phosphate reductase (415 aa).

It belongs to the gamma-glutamyl phosphate reductase family.

It localises to the cytoplasm. The enzyme catalyses L-glutamate 5-semialdehyde + phosphate + NADP(+) = L-glutamyl 5-phosphate + NADPH + H(+). The protein operates within amino-acid biosynthesis; L-proline biosynthesis; L-glutamate 5-semialdehyde from L-glutamate: step 2/2. Its function is as follows. Catalyzes the NADPH-dependent reduction of L-glutamate 5-phosphate into L-glutamate 5-semialdehyde and phosphate. The product spontaneously undergoes cyclization to form 1-pyrroline-5-carboxylate. The protein is Gamma-glutamyl phosphate reductase of Mycolicibacterium gilvum (strain PYR-GCK) (Mycobacterium gilvum (strain PYR-GCK)).